The primary structure comprises 876 residues: Leucine--tRNA ligase (876 aa).

The 'HIGH' region signature appears at 43–53 (PYPSGRIHMGH). Residues 632-636 (KMSKS) carry the 'KMSKS' region motif. Residue Lys-635 coordinates ATP.

It belongs to the class-I aminoacyl-tRNA synthetase family.

It localises to the cytoplasm. It catalyses the reaction tRNA(Leu) + L-leucine + ATP = L-leucyl-tRNA(Leu) + AMP + diphosphate. The polypeptide is Leucine--tRNA ligase (Rhodopseudomonas palustris (strain ATCC BAA-98 / CGA009)).